A 105-amino-acid chain; its full sequence is Urease subunit beta (105 aa).

It belongs to the urease beta subunit family. As to quaternary structure, heterotrimer of UreA (gamma), UreB (beta) and UreC (alpha) subunits. Three heterotrimers associate to form the active enzyme.

Its subcellular location is the cytoplasm. The catalysed reaction is urea + 2 H2O + H(+) = hydrogencarbonate + 2 NH4(+). It functions in the pathway nitrogen metabolism; urea degradation; CO(2) and NH(3) from urea (urease route): step 1/1. The chain is Urease subunit beta from Pseudomonas putida (strain W619).